A 218-amino-acid chain; its full sequence is Ropporin-1-like protein (218 aa).

An RIIa domain is found at 17 to 46 (PELTDILKQFTKAAIRTQPADVLQWSAGYF).

It belongs to the ropporin family. In terms of assembly, component of the axonemal radial spoke complex 1 (RS1), at least composed of spoke head proteins RSPH1, RSPH3, RSPH9 and the cilia-specific component RSPH4A or sperm-specific component RSPH6A, spoke stalk proteins RSPH14, DNAJB13, DYDC1, ROPN1L and NME5, and the anchor protein IQUB. May interact with AKAP3. Interacts with FSCB; the interaction increases upon spermatozoa capacitation conditions. Interacts with CFAP61. In terms of processing, sumoylated, sumoylation decreases upon spermatozoa capacitation conditions.

Its subcellular location is the cell projection. The protein localises to the cilium. It is found in the flagellum. Functions as part of axonemal radial spoke complexes that play an important part in the motility of sperm and cilia. Important for male fertility. With ROPN1, involved in fibrous sheath integrity and sperm motility, plays a role in PKA-dependent signaling processes required for spermatozoa capacitation. The polypeptide is Ropporin-1-like protein (ROPN1L) (Bos taurus (Bovine)).